The sequence spans 708 residues: Leucine-rich repeat neuronal protein 3 (708 aa).

An N-terminal signal peptide occupies residues 1–22 (MKDMPLRIHVLLGLAITTLVQA). The region spanning 23-69 (VDKKVDCPRLCTCEIRPWFTPRSIYMEASTVDCNDLGLLTFPARLPA) is the LRRNT domain. The Extracellular portion of the chain corresponds to 23-628 (VDKKVDCPRL…KEYEKNNTTT (606 aa)). LRR repeat units follow at residues 70–91 (NTQI…TDFP), 93–114 (NLTG…NVKK), 117–138 (QLLS…CLSE), 141–162 (NLQE…AFIG), 165–186 (NLLR…WFDA), 189–210 (NLEI…NFKP), 213–234 (NLRS…ALVG), 237–258 (NLES…ALQK), 261–282 (NLKF…DFSN), 285–304 (HLKE…DSLA), 310–332 (DLRK…AFFR), and 335–358 (KLES…ESLP). Asparagine 93 and asparagine 103 each carry an N-linked (GlcNAc...) asparagine glycan. An N-linked (GlcNAc...) asparagine glycan is attached at asparagine 223. One can recognise an LRRCT domain in the interval 368–421 (NPIRCDCVIRWMNMNKTNIRFMEPDSLFCVDPPEFQGQNVRQVHFRDMMEICLP). N-linked (GlcNAc...) asparagine glycosylation is present at asparagine 382. The 94-residue stretch at 421–514 (PLIAPESFPS…DLKSVMIKVD (94 aa)) folds into the Ig-like C2-type domain. A disulfide bridge connects residues cysteine 444 and cysteine 496. 5 N-linked (GlcNAc...) asparagine glycosylation sites follow: asparagine 522, asparagine 579, asparagine 608, asparagine 624, and asparagine 625. The region spanning 523–617 (GSLNIKIRDI…NVTTKGLHPD (95 aa)) is the Fibronectin type-III domain. A helical membrane pass occupies residues 629 to 649 (LMACLGGLLGIIGVICLISCL). Residues 650–708 (SPEMNCDGGHSYVRNYLQKPTFALGELYPPLINLWEAGKEKSTSLKVKATVIGLPTNMS) lie on the Cytoplasmic side of the membrane.

It localises to the membrane. This chain is Leucine-rich repeat neuronal protein 3 (LRRN3), found in Homo sapiens (Human).